We begin with the raw amino-acid sequence, 124 residues long: Small ribosomal subunit protein uS12 (124 aa).

At D89 the chain carries 3-methylthioaspartic acid.

The protein belongs to the universal ribosomal protein uS12 family. Part of the 30S ribosomal subunit. Contacts proteins S8 and S17. May interact with IF1 in the 30S initiation complex.

Its function is as follows. With S4 and S5 plays an important role in translational accuracy. Interacts with and stabilizes bases of the 16S rRNA that are involved in tRNA selection in the A site and with the mRNA backbone. Located at the interface of the 30S and 50S subunits, it traverses the body of the 30S subunit contacting proteins on the other side and probably holding the rRNA structure together. The combined cluster of proteins S8, S12 and S17 appears to hold together the shoulder and platform of the 30S subunit. This chain is Small ribosomal subunit protein uS12, found in Hydrogenovibrio crunogenus (strain DSM 25203 / XCL-2) (Thiomicrospira crunogena).